The primary structure comprises 150 residues: Viral late gene transcription factor 2 (150 aa).

Belongs to the orthopoxvirus VLTF-2/OPG126 family. As to quaternary structure, interacts with the late transcription elongation factor VLTF-4/OPG110. Interacts with the late transcription factors VLTF-1/OPG093.

Its function is as follows. Acts with RNA polymerase to initiate transcription from late gene promoters. The polypeptide is Viral late gene transcription factor 2 (OPG126) (Monkeypox virus).